The following is a 332-amino-acid chain: Putative pumilio homolog 20 (332 aa).

The PUM-HD domain maps to 1–332 (MAHQLRFAAA…NIASILNSIR (332 aa)). Pumilio repeat units follow at residues 89 to 124 (SDPD…FAAA) and 125 to 159 (ILRR…AMYE). The stretch at 160-191 (HILHYASHIARDKHGNLALNDIITDAYRNKLF) is one Pumilio 3; degenerate repeat. Pumilio repeat units follow at residues 192-228 (DVIA…NIVV), 229-266 (SLRG…ELME), and 267-303 (CEGD…DLFW).

It is found in the cytoplasm. Its function is as follows. Sequence-specific RNA-binding protein that regulates translation and mRNA stability by binding the 3'-UTR of target mRNAs. The chain is Putative pumilio homolog 20 (APUM20) from Arabidopsis thaliana (Mouse-ear cress).